The following is a 149-amino-acid chain: Leghemoglobin (149 aa).

The Globin domain occupies 3 to 147; it reads AFSEKQESLV…LAAAIKKAMG (145 aa). Nitrated tyrosine is present on Tyr-31. Ser-46 provides a ligand contact to heme b. Ser-46 bears the Phosphoserine mark. Residue His-62 participates in O2 binding. Heme b contacts are provided by Lys-65, His-94, and Lys-97. Tyr-135 carries the nitrated tyrosine modification.

Belongs to the plant globin family. In terms of assembly, monomer. In terms of processing, nitrated in effective nodules and particularly in hypoxic conditions; this mechanism may play a protective role in the symbiosis by buffering toxic peroxynitrite NO(2)(-). Nitration level decrease during nodule senescence. Phosphorylation at Ser-46 disrupts the molecular environment of its porphyrin ring oxygen binding pocket, thus leading to a reduced oxygen consumption and to the delivery of oxygen O(2) to symbiosomes. As to expression, root nodules.

The protein localises to the cytoplasm. The protein resides in the cytosol. It is found in the nucleus. Functionally, leghemoglobin that reversibly binds oxygen O(2) through a pentacoordinated heme iron. In root nodules, facilitates the diffusion of oxygen to the bacteroids while preventing the bacterial nitrogenase from being inactivated by buffering dioxygen, nitric oxide and carbon monoxide, and promoting the formation of reactive oxygen species (ROS, e.g. H(2)O(2)). This role is essential for symbiotic nitrogen fixation (SNF). The chain is Leghemoglobin from Canavalia lineata (Beach bean).